A 251-amino-acid polypeptide reads, in one-letter code: Putative imidazole glycerol phosphate synthase subunit hisF2 (251 aa).

The active site involves Asp130.

The protein belongs to the HisA/HisF family. In terms of assembly, heterodimer of HisH and HisF.

The protein resides in the cytoplasm. The enzyme catalyses 5-[(5-phospho-1-deoxy-D-ribulos-1-ylimino)methylamino]-1-(5-phospho-beta-D-ribosyl)imidazole-4-carboxamide + L-glutamine = D-erythro-1-(imidazol-4-yl)glycerol 3-phosphate + 5-amino-1-(5-phospho-beta-D-ribosyl)imidazole-4-carboxamide + L-glutamate + H(+). It participates in amino-acid biosynthesis; L-histidine biosynthesis; L-histidine from 5-phospho-alpha-D-ribose 1-diphosphate: step 5/9. In terms of biological role, IGPS catalyzes the conversion of PRFAR and glutamine to IGP, AICAR and glutamate. The HisF subunit catalyzes the cyclization activity that produces IGP and AICAR from PRFAR using the ammonia provided by the HisH subunit. The polypeptide is Putative imidazole glycerol phosphate synthase subunit hisF2 (hisF2) (Pseudomonas aeruginosa (strain ATCC 15692 / DSM 22644 / CIP 104116 / JCM 14847 / LMG 12228 / 1C / PRS 101 / PAO1)).